We begin with the raw amino-acid sequence, 104 residues long: Large ribosomal subunit protein uL24 (104 aa).

The protein belongs to the universal ribosomal protein uL24 family. Part of the 50S ribosomal subunit.

One of two assembly initiator proteins, it binds directly to the 5'-end of the 23S rRNA, where it nucleates assembly of the 50S subunit. Its function is as follows. One of the proteins that surrounds the polypeptide exit tunnel on the outside of the subunit. The chain is Large ribosomal subunit protein uL24 from Sodalis glossinidius (strain morsitans).